Here is a 132-residue protein sequence, read N- to C-terminus: Nuclear transition protein 2 (132 aa).

Over residues methionine 1–arginine 20 the composition is skewed to polar residues. The segment at methionine 1–asparagine 132 is disordered. 6 residues coordinate Zn(2+): histidine 12, histidine 16, histidine 24, cysteine 29, cysteine 31, and cysteine 35. A compositionally biased stretch (basic residues) spans serine 37–proline 59. Residues serine 82–cysteine 94 are compositionally biased toward polar residues. The Nuclear localization signal motif lies at glycine 105–valine 113. A compositionally biased stretch (basic residues) spans isoleucine 108–asparagine 132. Residue serine 127 is modified to Phosphoserine.

Belongs to the nuclear transition protein 2 family. As to expression, testis.

Its subcellular location is the nucleus. The protein localises to the nucleolus. It localises to the chromosome. Plays a key role in the replacement of histones to protamine in the elongating spermatids of mammals. In condensing spermatids, loaded onto the nucleosomes, where it promotes the recruitment and processing of protamines, which are responsible for histone eviction. The sequence is that of Nuclear transition protein 2 (TNP2) from Bos taurus (Bovine).